A 655-amino-acid chain; its full sequence is Very long-chain specific acyl-CoA dehydrogenase, mitochondrial (655 aa).

Residues 1–40 (MRAARMAQSTGRQLLRLRGVSSWPGELLGQPRPGPARRPY) constitute a mitochondrion transit peptide. The disordered stretch occupies residues 22–66 (SWPGELLGQPRPGPARRPYASGVAQAAVDQSDSQPSEASTREKRA). A catalytic region spans residues 41 to 482 (ASGVAQAAVD…ALQGCMDKGK (442 aa)). Residues 49–59 (VDQSDSQPSEA) show a composition bias toward polar residues. Lysine 71 carries the post-translational modification N6-acetyllysine; alternate. Position 71 is an N6-succinyllysine; alternate (lysine 71). Lysine 195 carries the N6-succinyllysine modification. 214–223 (FCLTEPSSGS) is a binding site for FAD. Cysteine 237 carries the S-nitrosocysteine modification. Lysine 239 is subject to N6-acetyllysine; alternate. Residue lysine 239 is modified to N6-succinyllysine; alternate. Position 249 to 251 (249 to 251 (WIS)) interacts with FAD. An N6-acetyllysine; alternate mark is found at lysine 276 and lysine 278. Residues lysine 276 and lysine 278 each carry the N6-succinyllysine; alternate modification. An N6-acetyllysine modification is found at lysine 298. Lysine 331 carries the N6-acetyllysine; alternate modification. Lysine 331 bears the N6-succinyllysine; alternate mark. Lysine 372 bears the N6-succinyllysine mark. 461–463 (FEG) serves as a coordination point for substrate. Residue glutamate 462 is the Proton acceptor of the active site. 464 to 466 (TND) serves as a coordination point for FAD. Lysine 482 is subject to N6-acetyllysine; alternate. Residue lysine 482 is modified to N6-succinyllysine; alternate. Residues 483–516 (ELSGLGNALKNPFGNAGLLLGEAGKQLRRRAGLG) form a membrane-anchoring region. Phosphoserine occurs at positions 517 and 522. Lysine 550 carries the post-translational modification N6-acetyllysine. Lysine 556 carries the N6-acetyllysine; alternate modification. Lysine 556 is subject to N6-succinyllysine; alternate. Glutamine 562 contributes to the FAD binding site. Lysine 639 carries the N6-succinyllysine modification.

This sequence belongs to the acyl-CoA dehydrogenase family. As to quaternary structure, homodimer. Homodimerizes after import into the mitochondrion. It depends on FAD as a cofactor. Post-translationally, S-nitrosylation at Cys-237 in liver improves catalytic efficiency.

The protein resides in the mitochondrion inner membrane. The enzyme catalyses a very-long-chain 2,3-saturated fatty acyl-CoA + oxidized [electron-transfer flavoprotein] + H(+) = a very-long-chain (2E)-enoyl-CoA + reduced [electron-transfer flavoprotein]. It catalyses the reaction dodecanoyl-CoA + oxidized [electron-transfer flavoprotein] + H(+) = (2E)-dodecenoyl-CoA + reduced [electron-transfer flavoprotein]. It carries out the reaction tetradecanoyl-CoA + oxidized [electron-transfer flavoprotein] + H(+) = (2E)-tetradecenoyl-CoA + reduced [electron-transfer flavoprotein]. The catalysed reaction is oxidized [electron-transfer flavoprotein] + hexadecanoyl-CoA + H(+) = (2E)-hexadecenoyl-CoA + reduced [electron-transfer flavoprotein]. The enzyme catalyses octadecanoyl-CoA + oxidized [electron-transfer flavoprotein] + H(+) = (2E)-octadecenoyl-CoA + reduced [electron-transfer flavoprotein]. It catalyses the reaction eicosanoyl-CoA + oxidized [electron-transfer flavoprotein] + H(+) = (2E)-eicosenoyl-CoA + reduced [electron-transfer flavoprotein]. It carries out the reaction docosanoyl-CoA + oxidized [electron-transfer flavoprotein] + H(+) = (2E)-docosenoyl-CoA + reduced [electron-transfer flavoprotein]. The catalysed reaction is tetracosanoyl-CoA + oxidized [electron-transfer flavoprotein] + H(+) = (2E)-tetracosenoyl-CoA + reduced [electron-transfer flavoprotein]. It participates in lipid metabolism; mitochondrial fatty acid beta-oxidation. In terms of biological role, very long-chain specific acyl-CoA dehydrogenase is one of the acyl-CoA dehydrogenases that catalyze the first step of mitochondrial fatty acid beta-oxidation, an aerobic process breaking down fatty acids into acetyl-CoA and allowing the production of energy from fats. The first step of fatty acid beta-oxidation consists in the removal of one hydrogen from C-2 and C-3 of the straight-chain fatty acyl-CoA thioester, resulting in the formation of trans-2-enoyl-CoA. Among the different mitochondrial acyl-CoA dehydrogenases, very long-chain specific acyl-CoA dehydrogenase acts specifically on acyl-CoAs with saturated 12 to 24 carbons long primary chains. This chain is Very long-chain specific acyl-CoA dehydrogenase, mitochondrial, found in Bos taurus (Bovine).